We begin with the raw amino-acid sequence, 1269 residues long: DNA-directed RNA polymerase subunit beta (1269 aa).

The protein belongs to the RNA polymerase beta chain family. In terms of assembly, the RNAP catalytic core consists of 2 alpha, 1 beta, 1 beta' and 1 omega subunit. When a sigma factor is associated with the core the holoenzyme is formed, which can initiate transcription.

The catalysed reaction is RNA(n) + a ribonucleoside 5'-triphosphate = RNA(n+1) + diphosphate. DNA-dependent RNA polymerase catalyzes the transcription of DNA into RNA using the four ribonucleoside triphosphates as substrates. The protein is DNA-directed RNA polymerase subunit beta of Porphyromonas gingivalis (strain ATCC 33277 / DSM 20709 / CIP 103683 / JCM 12257 / NCTC 11834 / 2561).